A 201-amino-acid chain; its full sequence is Large ribosomal subunit protein uL4 (201 aa).

Positions arginine 39–arginine 72 are disordered. The segment covering threonine 42 to lysine 53 has biased composition (polar residues).

The protein belongs to the universal ribosomal protein uL4 family. In terms of assembly, part of the 50S ribosomal subunit.

Functionally, one of the primary rRNA binding proteins, this protein initially binds near the 5'-end of the 23S rRNA. It is important during the early stages of 50S assembly. It makes multiple contacts with different domains of the 23S rRNA in the assembled 50S subunit and ribosome. Forms part of the polypeptide exit tunnel. The sequence is that of Large ribosomal subunit protein uL4 from Deinococcus deserti (strain DSM 17065 / CIP 109153 / LMG 22923 / VCD115).